The chain runs to 949 residues: Bifunctional glutamine synthetase adenylyltransferase/adenylyl-removing enzyme (949 aa).

An adenylyl removase region spans residues 1–450 (MQNQGNKVLS…HFNATVGGTD (450 aa)). The interval 455–949 (NDHWTALFWN…IEIYNEILAI (495 aa)) is adenylyl transferase.

Belongs to the GlnE family. Mg(2+) is required as a cofactor.

It carries out the reaction [glutamine synthetase]-O(4)-(5'-adenylyl)-L-tyrosine + phosphate = [glutamine synthetase]-L-tyrosine + ADP. It catalyses the reaction [glutamine synthetase]-L-tyrosine + ATP = [glutamine synthetase]-O(4)-(5'-adenylyl)-L-tyrosine + diphosphate. In terms of biological role, involved in the regulation of glutamine synthetase GlnA, a key enzyme in the process to assimilate ammonia. When cellular nitrogen levels are high, the C-terminal adenylyl transferase (AT) inactivates GlnA by covalent transfer of an adenylyl group from ATP to specific tyrosine residue of GlnA, thus reducing its activity. Conversely, when nitrogen levels are low, the N-terminal adenylyl removase (AR) activates GlnA by removing the adenylyl group by phosphorolysis, increasing its activity. The regulatory region of GlnE binds the signal transduction protein PII (GlnB) which indicates the nitrogen status of the cell. The sequence is that of Bifunctional glutamine synthetase adenylyltransferase/adenylyl-removing enzyme from Shewanella frigidimarina (strain NCIMB 400).